The primary structure comprises 642 residues: tRNA uridine 5-carboxymethylaminomethyl modification enzyme MnmG (642 aa).

FAD is bound at residue 24–29 (GGGHAG). 284 to 298 (GPRYCPSIEDKIHRF) provides a ligand contact to NAD(+).

The protein belongs to the MnmG family. As to quaternary structure, homodimer. Heterotetramer of two MnmE and two MnmG subunits. FAD serves as cofactor.

The protein resides in the cytoplasm. NAD-binding protein involved in the addition of a carboxymethylaminomethyl (cmnm) group at the wobble position (U34) of certain tRNAs, forming tRNA-cmnm(5)s(2)U34. This is tRNA uridine 5-carboxymethylaminomethyl modification enzyme MnmG from Psychrobacter sp. (strain PRwf-1).